The primary structure comprises 315 residues: Mitochondrial glycine transporter (315 aa).

Solcar repeat units follow at residues 19 to 102 (SKTT…LRTG), 125 to 206 (TANL…LKRR), and 221 to 305 (KSSS…LILR). Transmembrane regions (helical) follow at residues 25–50 (FTAGLFSGLTSSILLQPADLLKTRVQ), 77–103 (GTLPSALRTGFGSALYFTSLNALRTGL), 128–153 (LATGAAARVAAGFVMMPVTVIKVRYE), 181–204 (GFGATAARDAPYAGLYVLFYEQLK), 225–251 (INFVSGGLAAGLATTITNPFDAVKTRL), and 280–298 (GLGLRITRKALSSALAWTV).

Belongs to the mitochondrial carrier (TC 2.A.29) family. SLC25A38 subfamily.

The protein resides in the mitochondrion inner membrane. It carries out the reaction glycine(in) = glycine(out). Functionally, mitochondrial glycine transporter that imports glycine into the mitochondrial matrix. Plays an important role in providing glycine for the first enzymatic step in heme biosynthesis, the condensation of glycine with succinyl-CoA to produce 5-aminolevulinate (ALA) in the mitochondrial matrix. The polypeptide is Mitochondrial glycine transporter (Aspergillus niger (strain ATCC MYA-4892 / CBS 513.88 / FGSC A1513)).